The following is a 237-amino-acid chain: Phosphoribosylaminoimidazole-succinocarboxamide synthase (237 aa).

The protein belongs to the SAICAR synthetase family.

The catalysed reaction is 5-amino-1-(5-phospho-D-ribosyl)imidazole-4-carboxylate + L-aspartate + ATP = (2S)-2-[5-amino-1-(5-phospho-beta-D-ribosyl)imidazole-4-carboxamido]succinate + ADP + phosphate + 2 H(+). It functions in the pathway purine metabolism; IMP biosynthesis via de novo pathway; 5-amino-1-(5-phospho-D-ribosyl)imidazole-4-carboxamide from 5-amino-1-(5-phospho-D-ribosyl)imidazole-4-carboxylate: step 1/2. The sequence is that of Phosphoribosylaminoimidazole-succinocarboxamide synthase from Pseudomonas fluorescens (strain Pf0-1).